The following is a 109-amino-acid chain: Large ribosomal subunit protein uL22 (109 aa).

Belongs to the universal ribosomal protein uL22 family. In terms of assembly, part of the 50S ribosomal subunit.

Functionally, this protein binds specifically to 23S rRNA; its binding is stimulated by other ribosomal proteins, e.g. L4, L17, and L20. It is important during the early stages of 50S assembly. It makes multiple contacts with different domains of the 23S rRNA in the assembled 50S subunit and ribosome. Its function is as follows. The globular domain of the protein is located near the polypeptide exit tunnel on the outside of the subunit, while an extended beta-hairpin is found that lines the wall of the exit tunnel in the center of the 70S ribosome. The sequence is that of Large ribosomal subunit protein uL22 from Leptothrix cholodnii (strain ATCC 51168 / LMG 8142 / SP-6) (Leptothrix discophora (strain SP-6)).